The sequence spans 154 residues: Ribonuclease H (154 aa).

In terms of domain architecture, RNase H type-1 spans 1–142 (MRKQIEIFTD…CDELAKQGAE (142 aa)). Positions 10, 48, 70, and 134 each coordinate Mg(2+).

This sequence belongs to the RNase H family. As to quaternary structure, monomer. Mg(2+) is required as a cofactor.

Its subcellular location is the cytoplasm. The catalysed reaction is Endonucleolytic cleavage to 5'-phosphomonoester.. Functionally, endonuclease that specifically degrades the RNA of RNA-DNA hybrids. This chain is Ribonuclease H, found in Actinobacillus succinogenes (strain ATCC 55618 / DSM 22257 / CCUG 43843 / 130Z).